We begin with the raw amino-acid sequence, 171 residues long: MWCLAITGPPGAGKSTLARKVVEELKKAGLKVCGTSCPDVREGGRRVGFLIVDVEDGSRAWLARVDCEGPRVGRYKLCPGAEEVGVRALSKDCDVYLIDEIGPMELKLPKLREAMLRVVSGNKPFVAVYHARLRDEEFLRALSRCHKIFVTKDTREEAWKEALEALSSFSP.

ATP contacts are provided by residues 8 to 15 (GPPGAGKS) and 95 to 102 (VYLIDEIG).

It belongs to the THEP1 NTPase family.

It carries out the reaction a ribonucleoside 5'-triphosphate + H2O = a ribonucleoside 5'-diphosphate + phosphate + H(+). In terms of biological role, has nucleotide phosphatase activity towards ATP, GTP, CTP, TTP and UTP. May hydrolyze nucleoside diphosphates with lower efficiency. This is Nucleoside-triphosphatase THEP1 from Ignicoccus hospitalis (strain KIN4/I / DSM 18386 / JCM 14125).